We begin with the raw amino-acid sequence, 557 residues long: 2-isopropylmalate synthase (557 aa).

The Pyruvate carboxyltransferase domain maps to 31–304 (PTWCSVDLRD…DPGLNFASML (274 aa)). Positions 40, 243, 245, and 279 each coordinate Mg(2+). Residues 439 to 557 (IENPIKFLNF…NTMIKDSAAV (119 aa)) are regulatory domain.

The protein belongs to the alpha-IPM synthase/homocitrate synthase family. LeuA type 2 subfamily. Homodimer. Mg(2+) serves as cofactor.

The protein resides in the cytoplasm. The enzyme catalyses 3-methyl-2-oxobutanoate + acetyl-CoA + H2O = (2S)-2-isopropylmalate + CoA + H(+). It functions in the pathway amino-acid biosynthesis; L-leucine biosynthesis; L-leucine from 3-methyl-2-oxobutanoate: step 1/4. In terms of biological role, catalyzes the condensation of the acetyl group of acetyl-CoA with 3-methyl-2-oxobutanoate (2-ketoisovalerate) to form 3-carboxy-3-hydroxy-4-methylpentanoate (2-isopropylmalate). In Desulfitobacterium hafniense (strain Y51), this protein is 2-isopropylmalate synthase.